A 477-amino-acid polypeptide reads, in one-letter code: Trigger factor (477 aa).

A PPIase FKBP-type domain is found at 169 to 254 (EDRVTIDYLG…VKEVAKPNEL (86 aa)). A disordered region spans residues 435 to 477 (VSKEELTAEDEDAASEAKPAKKAAAKKKAAPKKKAEEGKSEEA). Over residues 454–466 (AKKAAAKKKAAPK) the composition is skewed to basic residues. Residues 467–477 (KKAEEGKSEEA) are compositionally biased toward basic and acidic residues.

This sequence belongs to the FKBP-type PPIase family. Tig subfamily.

It localises to the cytoplasm. It carries out the reaction [protein]-peptidylproline (omega=180) = [protein]-peptidylproline (omega=0). Its function is as follows. Involved in protein export. Acts as a chaperone by maintaining the newly synthesized protein in an open conformation. Functions as a peptidyl-prolyl cis-trans isomerase. The sequence is that of Trigger factor from Brucella suis biovar 1 (strain 1330).